A 344-amino-acid chain; its full sequence is Hypoxia-inducible factor 1-alpha inhibitor (344 aa).

Residue Ala2 is modified to N-acetylalanine. In terms of domain architecture, JmjC spans 133 to 303 (GRVYLQQTLN…PKRIEYPLKA (171 aa)). Residue Tyr136 coordinates 2-oxoglutarate. Residues Asp143 and 173–174 (LT) contribute to the substrate site. Thr187 contacts 2-oxoglutarate. Fe cation is bound by residues His190 and Asp192. 192–194 (DEQ) serves as a coordination point for substrate. Positions 196 and 205 each coordinate 2-oxoglutarate. A substrate-binding site is contributed by 229 to 230 (RQ). Fe cation is bound at residue His270. Asn285 is a 2-oxoglutarate binding site. Residues Ala291 and Asn312 each coordinate substrate.

Homodimer; homodimerization is essential for catalytic activity. It depends on Fe(2+) as a cofactor.

It localises to the nucleus. The protein localises to the cytoplasm. It is found in the perinuclear region. It carries out the reaction L-asparaginyl-[hypoxia-inducible factor alpha subunit] + 2-oxoglutarate + O2 = (3S)-3-hydroxy-L-asparaginyl-[hypoxia-inducible factor alpha subunit] + succinate + CO2. The enzyme catalyses L-histidyl-[ankyrin-repeat domain protein] + 2-oxoglutarate + O2 = (3S)-3-hydroxy-L-histidyl-[ankyrin-repeat domain protein] + succinate + CO2. The catalysed reaction is L-asparaginyl-[ankyrin-repeat domain protein] + 2-oxoglutarate + O2 = (3S)-3-hydroxy-L-asparaginyl-[ankyrin-repeat domain protein] + succinate + CO2. It catalyses the reaction L-aspartyl-[ankyrin-repeat domain protein] + 2-oxoglutarate + O2 = (3S)-3-hydroxy-L-aspartyl-[ankyrin-repeat domain protein] + succinate + CO2. Its function is as follows. Hydroxylates a specific Asn residue in the C-terminal transactivation domain (CAD) of HIF-1 alpha. The hydroxylation prevents interaction of HIF-1 with transcriptional coactivators. Also hydroxylates specific Asn, Asp and His residues within ankyrin repeat domain-containing proteins. In Danio rerio (Zebrafish), this protein is Hypoxia-inducible factor 1-alpha inhibitor (hif1an).